The following is a 484-amino-acid chain: Argininosuccinate lyase (484 aa).

This sequence belongs to the lyase 1 family. Argininosuccinate lyase subfamily.

The protein localises to the cytoplasm. The enzyme catalyses 2-(N(omega)-L-arginino)succinate = fumarate + L-arginine. The protein operates within amino-acid biosynthesis; L-arginine biosynthesis; L-arginine from L-ornithine and carbamoyl phosphate: step 3/3. This is Argininosuccinate lyase from Methanocaldococcus jannaschii (strain ATCC 43067 / DSM 2661 / JAL-1 / JCM 10045 / NBRC 100440) (Methanococcus jannaschii).